The primary structure comprises 416 residues: E3 ubiquitin-protein ligase makorin-2 (416 aa).

2 consecutive C3H1-type zinc fingers follow at residues 2–29 and 31–58; these read STKQ…HDLA and SKPS…HTKP. Residues 61-144 are disordered; the sequence is AAGGAVGPAP…DPQTSPEMKP (84 aa). The span at 95 to 123 shows a compositional bias: basic and acidic residues; the sequence is HSNEPGKREKKTLVLRDRNLTGLAEDKTP. S139 bears the Phosphoserine mark. The C3H1-type 3 zinc finger occupies 165–192; that stretch reads SNEPQLCPYAAAGECRFGDACVYLHGDM. The segment at 193 to 222 is makorin-type Cys-His; it reads CEICRLQVLHPFDPEQRKAHEKMCMSTFEH. An RING-type zinc finger spans residues 238 to 292; that stretch reads CSICMEVILEKASASERRFGILSNCSHTYCLSCIRQWRCAKQFENPIIKSCPECR. The C3H1-type 4 zinc-finger motif lies at 321–350; that stretch reads GMGKKACKYFEQGKGTCPFGSKCLYRHAYP.

As to quaternary structure, interacts with PDLIM2 (via LIM zinc-binding domain). Interacts with RELA. In terms of tissue distribution, highly expressed in the testis, and lower expression in the brain, thymus, heart, lung, liver, spleen, kidney, ovary, uterus, and seminal vesicle (at protein level). Expressed in primary immune cells, such as CD4-positive and CD8-positive T cells, CD19-positive B cells and CD11c-positive dendritic cells, and in embryonic fibroblasts (at protein level).

The protein resides in the cytoplasm. It localises to the nucleus. It carries out the reaction S-ubiquitinyl-[E2 ubiquitin-conjugating enzyme]-L-cysteine + [acceptor protein]-L-lysine = [E2 ubiquitin-conjugating enzyme]-L-cysteine + N(6)-ubiquitinyl-[acceptor protein]-L-lysine.. It functions in the pathway protein modification; protein ubiquitination. In terms of biological role, E3 ubiquitin ligase catalyzing the covalent attachment of ubiquitin moieties onto substrate proteins. Promotes the polyubiquitination and proteasome-dependent degradation of RELA/p65, thereby suppressing RELA-mediated NF-kappa-B transactivation and negatively regulating inflammatory responses. Plays a role in the regulation of spermiation and in male fertility. The chain is E3 ubiquitin-protein ligase makorin-2 (Mkrn2) from Mus musculus (Mouse).